Here is a 326-residue protein sequence, read N- to C-terminus: Tagatose 1,6-diphosphate aldolase (326 aa).

This sequence belongs to the aldolase LacD family.

It catalyses the reaction D-tagatofuranose 1,6-bisphosphate = D-glyceraldehyde 3-phosphate + dihydroxyacetone phosphate. It participates in carbohydrate metabolism; D-tagatose 6-phosphate degradation; D-glyceraldehyde 3-phosphate and glycerone phosphate from D-tagatose 6-phosphate: step 2/2. The protein is Tagatose 1,6-diphosphate aldolase of Staphylococcus aureus (strain bovine RF122 / ET3-1).